The following is a 229-amino-acid chain: Cytochrome c oxidase subunit 2 (229 aa).

Residues 1–26 are Mitochondrial intermembrane-facing; that stretch reads MATWAQFGLQDASSPLMEELTYFHDY. The helical transmembrane segment at 27-48 threads the bilayer; the sequence is ALIVLTLITILVFYGLVSLLLS. The Mitochondrial matrix segment spans residues 49–62; it reads SSTNRFFLEGQELE. A helical membrane pass occupies residues 63-82; that stretch reads TIWTVVPAFILIFIALPSLQ. Residues 83 to 229 lie on the Mitochondrial intermembrane side of the membrane; sequence LLYLMDEVNN…ENWVAQYIEE (147 aa). His161, Cys196, Glu198, Cys200, His204, and Met207 together coordinate Cu cation. Glu198 lines the Mg(2+) pocket.

Belongs to the cytochrome c oxidase subunit 2 family. Component of the cytochrome c oxidase (complex IV, CIV), a multisubunit enzyme composed of a catalytic core of 3 subunits and several supernumerary subunits. The complex exists as a monomer or a dimer and forms supercomplexes (SCs) in the inner mitochondrial membrane with ubiquinol-cytochrome c oxidoreductase (cytochrome b-c1 complex, complex III, CIII). Requires Cu cation as cofactor.

The protein localises to the mitochondrion inner membrane. It catalyses the reaction 4 Fe(II)-[cytochrome c] + O2 + 8 H(+)(in) = 4 Fe(III)-[cytochrome c] + 2 H2O + 4 H(+)(out). In terms of biological role, component of the cytochrome c oxidase, the last enzyme in the mitochondrial electron transport chain which drives oxidative phosphorylation. The respiratory chain contains 3 multisubunit complexes succinate dehydrogenase (complex II, CII), ubiquinol-cytochrome c oxidoreductase (cytochrome b-c1 complex, complex III, CIII) and cytochrome c oxidase (complex IV, CIV), that cooperate to transfer electrons derived from NADH and succinate to molecular oxygen, creating an electrochemical gradient over the inner membrane that drives transmembrane transport and the ATP synthase. Cytochrome c oxidase is the component of the respiratory chain that catalyzes the reduction of oxygen to water. Electrons originating from reduced cytochrome c in the intermembrane space (IMS) are transferred via the dinuclear copper A center (CU(A)) of subunit 2 and heme A of subunit 1 to the active site in subunit 1, a binuclear center (BNC) formed by heme A3 and copper B (CU(B)). The BNC reduces molecular oxygen to 2 water molecules using 4 electrons from cytochrome c in the IMS and 4 protons from the mitochondrial matrix. The protein is Cytochrome c oxidase subunit 2 (COII) of Paracentrotus lividus (Common sea urchin).